A 242-amino-acid chain; its full sequence is ATP-dependent dethiobiotin synthetase BioD (242 aa).

Position 12–17 (12–17 (EVGKTV)) interacts with ATP. Thr-16 is a binding site for Mg(2+). Lys-37 is a catalytic residue. Ser-41 is a binding site for substrate. ATP-binding positions include Asp-51 and 112–115 (EGAG). Residues Asp-51 and Glu-112 each coordinate Mg(2+).

Belongs to the dethiobiotin synthetase family. As to quaternary structure, homodimer. The cofactor is Mg(2+).

The protein localises to the cytoplasm. It carries out the reaction (7R,8S)-7,8-diammoniononanoate + CO2 + ATP = (4R,5S)-dethiobiotin + ADP + phosphate + 3 H(+). Its pathway is cofactor biosynthesis; biotin biosynthesis; biotin from 7,8-diaminononanoate: step 1/2. Its function is as follows. Catalyzes a mechanistically unusual reaction, the ATP-dependent insertion of CO2 between the N7 and N8 nitrogen atoms of 7,8-diaminopelargonic acid (DAPA, also called 7,8-diammoniononanoate) to form a ureido ring. This chain is ATP-dependent dethiobiotin synthetase BioD, found in Bacillus cereus (strain B4264).